Consider the following 235-residue polypeptide: LexA repressor (235 aa).

A DNA-binding region (H-T-H motif) is located at residues 26–46 (FDEMKEALDLASKSGIHRLIT). The segment at 72-104 (QATTAAPPKGRGAFRPQVLEGGGQAPTTSAQPQ) is disordered. Catalysis depends on for autocatalytic cleavage activity residues serine 156 and lysine 193.

It belongs to the peptidase S24 family. In terms of assembly, homodimer.

It carries out the reaction Hydrolysis of Ala-|-Gly bond in repressor LexA.. Represses a number of genes involved in the response to DNA damage (SOS response), including recA and lexA. In the presence of single-stranded DNA, RecA interacts with LexA causing an autocatalytic cleavage which disrupts the DNA-binding part of LexA, leading to derepression of the SOS regulon and eventually DNA repair. The protein is LexA repressor of Caulobacter sp. (strain K31).